Consider the following 160-residue polypeptide: MATEKVFPMTLDGKAKLENELQELKTVKRKEVVERIKIARSFGDLSENSEYDSAKDEQAFVEGRITTIENMIRNAQIIDAAEAHNGLVTLGNTVTFIELPDGEEETYTIVGSAEADPFEGKISNDSPIAKGLLGHKEGEEVTIQTPAGDMSVKIEKITAS.

Residues 10–37 (TLDGKAKLENELQELKTVKRKEVVERIK) adopt a coiled-coil conformation.

The protein belongs to the GreA/GreB family.

Functionally, necessary for efficient RNA polymerase transcription elongation past template-encoded arresting sites. The arresting sites in DNA have the property of trapping a certain fraction of elongating RNA polymerases that pass through, resulting in locked ternary complexes. Cleavage of the nascent transcript by cleavage factors such as GreA or GreB allows the resumption of elongation from the new 3'terminus. GreA releases sequences of 2 to 3 nucleotides. The polypeptide is Transcription elongation factor GreA (Listeria innocua serovar 6a (strain ATCC BAA-680 / CLIP 11262)).